The sequence spans 660 residues: Interferon-induced GTP-binding protein Mx1 (660 aa).

Methionine 1 is modified (N-acetylmethionine). Basic and acidic residues predominate over residues 1–10 (MVHSEAKMTR). A disordered region spans residues 1–29 (MVHSEAKMTRPDSASASKQQLLNGNADIQ). Residues 12–29 (DSASASKQQLLNGNADIQ) show a composition bias toward polar residues. Residues 67-340 (DLALPAIAVI…LITHISKSLP (274 aa)) form the Dynamin-type G domain. A G1 motif region spans residues 77–84 (GDQSSGKS). 77-84 (GDQSSGKS) is a GTP binding site. Residues 102–104 (VTR) are G2 motif. The tract at residues 178–181 (DLPG) is G3 motif. GTP contacts are provided by residues 178 to 182 (DLPGI) and 247 to 250 (TKPD). The tract at residues 247–250 (TKPD) is G4 motif. The interval 279 to 282 (KCRG) is G5 motif. The bundle signaling element (BSE) stretch occupies residues 341–366 (LLENQIKESYQNLSDELQKYGTDIPE). A middle domain region spans residues 366 to 533 (EDETEKTFFL…HFQMEKIVYC (168 aa)). A stalk region spans residues 367-630 (DETEKTFFLI…RDTYDWLLKE (264 aa)). The tract at residues 554 to 557 (KKKK) is critical for lipid-binding. The GED domain maps to 572–660 (MAEILEHLNA…ARRRLAKFPG (89 aa)).

Belongs to the TRAFAC class dynamin-like GTPase superfamily. Dynamin/Fzo/YdjA family. As to quaternary structure, homooligomer. Oligomerizes into multimeric filamentous or ring-like structures by virtue of its stalk domain. Oligomerization is critical for GTPase activity, protein stability, and recognition of viral target structures. Interacts with TRPC1, TRPC3, TRPC4, TRPC5, TRPC6 and TRPC7. Interacts with HSPA5. Interacts with TUBB/TUBB5. Interacts with DDX39A and DDX39B. ISGylated.

It localises to the cytoplasm. The protein localises to the endoplasmic reticulum membrane. It is found in the perinuclear region. Interferon-induced dynamin-like GTPase with antiviral activity. This is Interferon-induced GTP-binding protein Mx1 (MX1) from Equus caballus (Horse).